A 227-amino-acid chain; its full sequence is Cytochrome c oxidase subunit 2 (227 aa).

The Mitochondrial intermembrane portion of the chain corresponds to 1–14; it reads MAYPFQLGFQDATS. The chain crosses the membrane as a helical span at residues 15–45; that stretch reads PIMEELLHFHDHALMIVFLISSLVLYLISVM. Residues 46 to 59 are Mitochondrial matrix-facing; it reads LTTSLTHTSTMDAQ. Residues 60-87 form a helical membrane-spanning segment; the sequence is EVETIWTILPAMILIMIALPSLRILYMM. Topologically, residues 88–227 are mitochondrial intermembrane; sequence DEINNPYLTV…YFEKWSSSML (140 aa). Positions 161, 196, 198, 200, 204, and 207 each coordinate Cu cation. Glutamate 198 contributes to the Mg(2+) binding site. Tyrosine 218 bears the Phosphotyrosine mark.

The protein belongs to the cytochrome c oxidase subunit 2 family. In terms of assembly, component of the cytochrome c oxidase (complex IV, CIV), a multisubunit enzyme composed of 14 subunits. The complex is composed of a catalytic core of 3 subunits MT-CO1, MT-CO2 and MT-CO3, encoded in the mitochondrial DNA, and 11 supernumerary subunits COX4I, COX5A, COX5B, COX6A, COX6B, COX6C, COX7A, COX7B, COX7C, COX8 and NDUFA4, which are encoded in the nuclear genome. The complex exists as a monomer or a dimer and forms supercomplexes (SCs) in the inner mitochondrial membrane with NADH-ubiquinone oxidoreductase (complex I, CI) and ubiquinol-cytochrome c oxidoreductase (cytochrome b-c1 complex, complex III, CIII), resulting in different assemblies (supercomplex SCI(1)III(2)IV(1) and megacomplex MCI(2)III(2)IV(2)). Found in a complex with TMEM177, COA6, COX18, COX20, SCO1 and SCO2. Interacts with TMEM177 in a COX20-dependent manner. Interacts with COX20. Interacts with COX16. The cofactor is Cu cation.

It is found in the mitochondrion inner membrane. The enzyme catalyses 4 Fe(II)-[cytochrome c] + O2 + 8 H(+)(in) = 4 Fe(III)-[cytochrome c] + 2 H2O + 4 H(+)(out). Functionally, component of the cytochrome c oxidase, the last enzyme in the mitochondrial electron transport chain which drives oxidative phosphorylation. The respiratory chain contains 3 multisubunit complexes succinate dehydrogenase (complex II, CII), ubiquinol-cytochrome c oxidoreductase (cytochrome b-c1 complex, complex III, CIII) and cytochrome c oxidase (complex IV, CIV), that cooperate to transfer electrons derived from NADH and succinate to molecular oxygen, creating an electrochemical gradient over the inner membrane that drives transmembrane transport and the ATP synthase. Cytochrome c oxidase is the component of the respiratory chain that catalyzes the reduction of oxygen to water. Electrons originating from reduced cytochrome c in the intermembrane space (IMS) are transferred via the dinuclear copper A center (CU(A)) of subunit 2 and heme A of subunit 1 to the active site in subunit 1, a binuclear center (BNC) formed by heme A3 and copper B (CU(B)). The BNC reduces molecular oxygen to 2 water molecules using 4 electrons from cytochrome c in the IMS and 4 protons from the mitochondrial matrix. In Rousettus leschenaultii (Leschenault's rousette), this protein is Cytochrome c oxidase subunit 2 (MT-CO2).